Reading from the N-terminus, the 597-residue chain is Gigaxonin (597 aa).

The 70-residue stretch at 30-99 (CDAHLVLDGE…IFSGQIRLNE (70 aa)) folds into the BTB domain. The BACK domain occupies 134 to 236 (CIGIRDFALH…DSSYLREQML (103 aa)). Kelch repeat units follow at residues 274–326 (CIVT…SAEG), 327–374 (FLFV…EIDG), 376–421 (LYIL…AMKK), 422–468 (KIYA…GVAM), 470–522 (LYVF…VYGA), and 528–574 (SIYV…AALR).

As to quaternary structure, interacts with TBCB. Interacts with CUL3. Part of a complex that contains CUL3, RBX1 and GAN. Interacts (via BTB domain) with UBA1. Interacts (via Kelch domains) with MAP1B (via C-terminus) and MAP1S (via C-terminus). Post-translationally, ubiquitinated by E3 ubiquitin ligase complex formed by CUL3 and RBX1 and probably targeted for proteasome-independent degradation. Expressed in brain, heart and muscle (at protein level).

The protein localises to the cytoplasm. It localises to the cytoskeleton. It functions in the pathway protein modification; protein ubiquitination. Probable cytoskeletal component that directly or indirectly plays an important role in neurofilament architecture. May act as a substrate-specific adapter of an E3 ubiquitin-protein ligase complex which mediates the ubiquitination and subsequent proteasomal degradation of target proteins. Controls degradation of TBCB. Controls degradation of MAP1B and MAP1S, and is critical for neuronal maintenance and survival. The polypeptide is Gigaxonin (Mus musculus (Mouse)).